The following is a 315-amino-acid chain: MTTQQLKEKISKIIDNFSGIRVVFTTTANELKLSRIEGSALNSIAEGFIDKIKEDIINNEDLTSPLLSNFDDRKNALFKFDYEQYPEEFNKITQAIAIPPNSQDYYNPLNKFTDVKGIIILISGDNKCLALYKNKTNLAVLRNSRKMFNLVPDPDGYLKQLPNEILRLDFNYDLFSIGEDFYIKNHKTLETQMKFHQVIEAQAVIALNSLRDSLLIEDISGLEKSSREISFARKLAKISKHSPVLGKIDTKTIIDYVSQHKYLSAILQINEAGDKLLIKTKTSQKHFIKLMSDDYLQSDLTKIIYMSIAKDRLDE.

Its function is as follows. Component of antiviral defense system Kiwa, composed of KwaA and KwaB. Expression of Kiwa in E.coli (strain MG1655) confers resistance to phages lambda and SECphi18. In Escherichia coli O55:H7 (strain RM12579 / EPEC), this protein is Kiwa protein KwaB.